The chain runs to 745 residues: Probable endochitinase ARB_07371 (745 aa).

The signal sequence occupies residues 1-23 (MALPKTIMAFIAFISFLVSTTFA). The GH18 domain occupies 30–351 (TNVVTYWGQG…SNIKRLLLNN (322 aa)). Glutamate 178 functions as the Proton donor in the catalytic mechanism. Disordered stretches follow at residues 351 to 372 (NDPS…SMST) and 395 to 446 (WSMP…TTEI). The span at 357 to 372 (TTTSKTMSSTKTSMST) shows a compositional bias: low complexity. N-linked (GlcNAc...) asparagine glycans are attached at residues asparagine 438 and asparagine 484. The disordered stretch occupies residues 651 to 715 (SEPMTPTQVP…EMGGNGGDRT (65 aa)). Glycine 720 carries the GPI-anchor amidated glycine lipid modification. The propeptide at 721–745 (GAGVVSPSFSVVVIVLGSIVYHIMQ) is removed in mature form.

It belongs to the glycosyl hydrolase 18 family. Chitinase class III subfamily.

It is found in the cell membrane. The protein resides in the secreted. The protein localises to the cell wall. It carries out the reaction Random endo-hydrolysis of N-acetyl-beta-D-glucosaminide (1-&gt;4)-beta-linkages in chitin and chitodextrins.. GPI-anchored chitinase involved in the degradation of chitin, a component of the cell walls of fungi and exoskeletal elements of some animals (including worms and arthropods). Required to reshape the cell wall at the sites where cell wall remodeling and/or cell wall maturation actively take place such as sites of conidia formation. In Arthroderma benhamiae (strain ATCC MYA-4681 / CBS 112371) (Trichophyton mentagrophytes), this protein is Probable endochitinase ARB_07371.